The chain runs to 520 residues: Interferon lambda receptor 1 (520 aa).

The N-terminal stretch at 1–20 is a signal peptide; it reads MAGPERWGPLLLCLLQAAPG. Residues 21-228 are Extracellular-facing; it reads RPRLAPPQNV…LLEVPEANWA (208 aa). In terms of domain architecture, Fibronectin type-III spans 26–126; it reads PPQNVTLLSQ…LDYLFEVEPA (101 aa). N-linked (GlcNAc...) asparagine glycosylation is found at N29 and N36. 2 disulfides stabilise this stretch: C74/C82 and C86/C150. N142 and N169 each carry an N-linked (GlcNAc...) asparagine glycan. An intrachain disulfide couples C195 to C217. The helical transmembrane segment at 229–249 threads the bilayer; that stretch reads FLVLPSLLILLLVIAAGGVIW. The Cytoplasmic segment spans residues 250 to 520; it reads KTLMGNPWFQ…GRTLGHYMAR (271 aa). Disordered regions lie at residues 302–439 and 477–520; these read VRPT…FLEE and ESSP…YMAR. Over residues 323 to 336 the composition is skewed to acidic residues; sequence AEDEEEEDEEDTED. A compositionally biased stretch (low complexity) spans 380–392; sequence SSAWDSSDRSWAS. The segment covering 479 to 495 has biased composition (acidic residues); the sequence is SPEEEEEARESEIEDSD.

Belongs to the type II cytokine receptor family. Heterodimer with IL10RB. Ubiquitinated by FBXO45-containing E3 ligase leading to proteasomal degradation. As to expression, widely expressed.

The protein localises to the membrane. The IFNLR1/IL10RB dimer is a receptor for the cytokine ligands IFNL2 and IFNL3 and mediates their antiviral activity. The ligand/receptor complex stimulate the activation of the JAK/STAT signaling pathway leading to the expression of IFN-stimulated genes (ISG), which contribute to the antiviral state. Determines the cell type specificity of the lambda interferon action. Shows a more restricted pattern of expression in the epithelial tissues thereby limiting responses to lambda interferons primarily to epithelial cells of the respiratory, gastrointestinal, and reproductive tracts. Seems not to be essential for early virus-activated host defense in vaginal infection, but plays an important role in Toll-like receptor (TLR)-induced antiviral defense. Plays a significant role in the antiviral immune defense in the intestinal epithelium. This chain is Interferon lambda receptor 1 (IFNLR1), found in Homo sapiens (Human).